The following is a 333-amino-acid chain: Homeobox protein Hox-D13 (333 aa).

The tract at residues 1–24 (MDGLRTDGGAAGAAPASSSSSSSV) is disordered. Residues 12–24 (GAAPASSSSSSSV) are compositionally biased toward low complexity. A DNA-binding region (homeobox) is located at residues 266-325 (GRKKRVPYTKLQLKELENEYAINKFINKDKRRRISAATNLSERQVTIWFQNRRVKDKKIV).

It belongs to the Abd-B homeobox family.

Its subcellular location is the nucleus. Sequence-specific transcription factor that binds gene promoters and activates their transcription. Part of a developmental regulatory system that provides cells with specific positional identities on the anterior-posterior axis. This Carollia perspicillata (Seba's short-tailed bat) protein is Homeobox protein Hox-D13 (HOXD13).